We begin with the raw amino-acid sequence, 211 residues long: Recombination protein RecR (211 aa).

A C4-type zinc finger spans residues cysteine 70–cysteine 85. Positions lysine 93–glutamine 190 constitute a Toprim domain.

It belongs to the RecR family.

Its function is as follows. May play a role in DNA repair. It seems to be involved in an RecBC-independent recombinational process of DNA repair. It may act with RecF and RecO. The polypeptide is Recombination protein RecR (Aquifex aeolicus (strain VF5)).